The primary structure comprises 413 residues: Aspartate aminotransferase, cytoplasmic (413 aa).

2 residues coordinate L-aspartate: Gly-39 and Trp-141. Ser-149 is subject to Phosphoserine. Position 195 (Asn-195) interacts with L-aspartate. Position 259 is an N6-(pyridoxal phosphate)lysine (Lys-259). An L-aspartate-binding site is contributed by Arg-387.

It belongs to the class-I pyridoxal-phosphate-dependent aminotransferase family. In terms of assembly, homodimer. Pyridoxal 5'-phosphate serves as cofactor.

It is found in the cytoplasm. The enzyme catalyses L-aspartate + 2-oxoglutarate = oxaloacetate + L-glutamate. The catalysed reaction is L-cysteine + 2-oxoglutarate = 2-oxo-3-sulfanylpropanoate + L-glutamate. It carries out the reaction (2S)-2-aminobutanoate + 2-oxoglutarate = 2-oxobutanoate + L-glutamate. It catalyses the reaction 3-sulfino-L-alanine + 2-oxoglutarate = 3-sulfinopyruvate + L-glutamate. Functionally, biosynthesis of L-glutamate from L-aspartate or L-cysteine. Important regulator of levels of glutamate, the major excitatory neurotransmitter of the vertebrate central nervous system. Acts as a scavenger of glutamate in brain neuroprotection. The aspartate aminotransferase activity is involved in hepatic glucose synthesis during development and in adipocyte glyceroneogenesis. Using L-cysteine as substrate, regulates levels of mercaptopyruvate, an important source of hydrogen sulfide. Mercaptopyruvate is converted into H(2)S via the action of 3-mercaptopyruvate sulfurtransferase (3MST). Hydrogen sulfide is an important synaptic modulator and neuroprotectant in the brain. The polypeptide is Aspartate aminotransferase, cytoplasmic (Macaca fascicularis (Crab-eating macaque)).